Consider the following 545-residue polypeptide: CTP synthase (545 aa).

An amidoligase domain region spans residues 1–266 (MATNYIFVTG…DDFVCERFRL (266 aa)). Position 14 (Ser-14) interacts with CTP. A UTP-binding site is contributed by Ser-14. ATP is bound by residues 15-20 (SLGKGI) and Asp-72. Positions 72 and 140 each coordinate Mg(2+). CTP is bound by residues 147 to 149 (DIE), 187 to 192 (KTKPTQ), and Lys-223. Residues 187-192 (KTKPTQ) and Lys-223 contribute to the UTP site. An ATP-binding site is contributed by 239-241 (KDV). In terms of domain architecture, Glutamine amidotransferase type-1 spans 291–542 (TIGMVGKYTE…VKAAYENHKK (252 aa)). Gly-352 provides a ligand contact to L-glutamine. Cys-379 (nucleophile; for glutamine hydrolysis) is an active-site residue. L-glutamine is bound by residues 380-383 (LGMQ), Glu-403, and Arg-470. Catalysis depends on residues His-515 and Glu-517.

The protein belongs to the CTP synthase family. Homotetramer.

The enzyme catalyses UTP + L-glutamine + ATP + H2O = CTP + L-glutamate + ADP + phosphate + 2 H(+). The catalysed reaction is L-glutamine + H2O = L-glutamate + NH4(+). It carries out the reaction UTP + NH4(+) + ATP = CTP + ADP + phosphate + 2 H(+). It functions in the pathway pyrimidine metabolism; CTP biosynthesis via de novo pathway; CTP from UDP: step 2/2. Its activity is regulated as follows. Allosterically activated by GTP, when glutamine is the substrate; GTP has no effect on the reaction when ammonia is the substrate. The allosteric effector GTP functions by stabilizing the protein conformation that binds the tetrahedral intermediate(s) formed during glutamine hydrolysis. Inhibited by the product CTP, via allosteric rather than competitive inhibition. Catalyzes the ATP-dependent amination of UTP to CTP with either L-glutamine or ammonia as the source of nitrogen. Regulates intracellular CTP levels through interactions with the four ribonucleotide triphosphates. The polypeptide is CTP synthase (Haemophilus influenzae (strain PittEE)).